Reading from the N-terminus, the 241-residue chain is Caffeoyl-CoA O-methyltransferase (241 aa).

Lys14 lines the substrate pocket. Residues Thr58, Glu80, 82–83 (GV), Ser88, Asp106, and Ala135 contribute to the S-adenosyl-L-methionine site. Asp158 contacts substrate. Asp158 contacts a divalent metal cation. Position 160 (Asp160) interacts with S-adenosyl-L-methionine. A divalent metal cation contacts are provided by Asp184 and Asn185.

It belongs to the class I-like SAM-binding methyltransferase superfamily. Cation-dependent O-methyltransferase family. CCoAMT subfamily. The cofactor is a divalent metal cation.

It carries out the reaction (E)-caffeoyl-CoA + S-adenosyl-L-methionine = (E)-feruloyl-CoA + S-adenosyl-L-homocysteine + H(+). Its pathway is aromatic compound metabolism; phenylpropanoid biosynthesis. Functionally, methylates caffeoyl-CoA to feruloyl-CoA and 5-hydroxyferuloyl-CoA to sinapoyl-CoA. Plays a role in the synthesis of feruloylated polysaccharides. Involved in the reinforcement of the plant cell wall. Also involved in the responding to wounding or pathogen challenge by the increased formation of cell wall-bound ferulic acid polymers. The sequence is that of Caffeoyl-CoA O-methyltransferase from Stellaria longipes (Longstalk starwort).